Here is a 165-residue protein sequence, read N- to C-terminus: Cysteine-rich hydrophobic domain-containing protein 2 (165 aa).

Residues 1–26 (MADFDEIYEEEEDEERALEEQLLKYS) are a coiled coil. The CHIC motif (Cys-rich) signature appears at 88–106 (CGCLCCCCTLGCSMWPVIC).

The protein belongs to the CHIC family. In terms of processing, palmitoylation in the CHIC motif is required for membrane association.

The protein localises to the cell membrane. The protein resides in the cytoplasmic vesicle. This Homo sapiens (Human) protein is Cysteine-rich hydrophobic domain-containing protein 2 (CHIC2).